The sequence spans 940 residues: Isoleucine--tRNA ligase (940 aa).

Positions 58–68 (PYANGAIHIGH) match the 'HIGH' region motif. Position 564 (Glu564) interacts with L-isoleucyl-5'-AMP. The short motif at 605–609 (KMSKS) is the 'KMSKS' region element. Residue Lys608 participates in ATP binding. Zn(2+)-binding residues include Cys903, Cys906, Cys923, and Cys926.

It belongs to the class-I aminoacyl-tRNA synthetase family. IleS type 1 subfamily. In terms of assembly, monomer. Zn(2+) serves as cofactor.

It is found in the cytoplasm. It carries out the reaction tRNA(Ile) + L-isoleucine + ATP = L-isoleucyl-tRNA(Ile) + AMP + diphosphate. Functionally, catalyzes the attachment of isoleucine to tRNA(Ile). As IleRS can inadvertently accommodate and process structurally similar amino acids such as valine, to avoid such errors it has two additional distinct tRNA(Ile)-dependent editing activities. One activity is designated as 'pretransfer' editing and involves the hydrolysis of activated Val-AMP. The other activity is designated 'posttransfer' editing and involves deacylation of mischarged Val-tRNA(Ile). The sequence is that of Isoleucine--tRNA ligase from Nitrosococcus oceani (strain ATCC 19707 / BCRC 17464 / JCM 30415 / NCIMB 11848 / C-107).